Reading from the N-terminus, the 843-residue chain is Taste receptor type 1 member 2 (843 aa).

The first 19 residues, 1 to 19 (MGPQARTLHLLFLLLHALP), serve as a signal peptide directing secretion. Residues 20–570 (KPVMLVGNSD…AFLEWHEVPT (551 aa)) lie on the Extracellular side of the membrane. N-linked (GlcNAc...) asparagine glycans are attached at residues N87, N296, N316, N355, N372, N432, N484, N491, and N531. Residues 571-591 (IVVTILAALGFISTLAILLIF) traverse the membrane as a helical segment. Topologically, residues 592-606 (WRHFQTPMVRSAGGP) are cytoplasmic. Residues 607 to 627 (MCFLMLVPLLLAFGMVPVYVG) form a helical membrane-spanning segment. The Extracellular segment spans residues 628–642 (PPTVFSCFCRQAFFT). A helical transmembrane segment spans residues 643–663 (VCFSVCLSCITVRSFQIVCVF). The Cytoplasmic segment spans residues 664-682 (KMARRLPSAYGFWMRYHGP). A helical transmembrane segment spans residues 683 to 703 (YVFVAFITAVKVALVAGNMLA). Residues 704 to 731 (TTINPIGRTDPDDPNIIILSCHPNYRNG) lie on the Extracellular side of the membrane. The helical transmembrane segment at 732-752 (LLFNTSMDLLLSVLGFSFAYV) threads the bilayer. Residues 753–764 (GKELPTNYNEAK) lie on the Cytoplasmic side of the membrane. Residues 765 to 785 (FITLSMTFSFTSSISLCTFMS) form a helical membrane-spanning segment. Over 786 to 789 (VHDG) the chain is Extracellular. A helical transmembrane segment spans residues 790-810 (VLVTIMDLLVTVLNFLAIGLG). Over 811 to 843 (YFGPKCYMILFYPERNTSAYFNSMIQGYTMRKS) the chain is Cytoplasmic.

It belongs to the G-protein coupled receptor 3 family. TAS1R subfamily. In terms of assembly, forms heterodimers with TAS1R3. Expressed mainly in circumvallate and foliate taste papillae.

It is found in the cell membrane. In terms of biological role, putative taste receptor. TAS1R2/TAS1R3 recognizes diverse natural and synthetic sweeteners. This chain is Taste receptor type 1 member 2 (Tas1r2), found in Mus musculus (Mouse).